A 329-amino-acid polypeptide reads, in one-letter code: Probable acyltransferase FabY (329 aa).

An N-acetyltransferase domain is found at 18–162; sequence YHLRVPQTEE…RHFLMIKPVA (145 aa).

The protein belongs to the acetyltransferase family. FabY subfamily.

It functions in the pathway lipid metabolism; fatty acid biosynthesis. In terms of biological role, supports initiation of fatty acid biosynthesis in the absence of FabH. The polypeptide is Probable acyltransferase FabY (Escherichia coli O157:H7).